Consider the following 368-residue polypeptide: MTVKLTIDCMGGDHGPSVTVPAAVKFVRSHPDAHLMLVGIESAIRAQLKKCKALGEPALSVVPATEVVAMDDPVEVALRKKKDSSMRVALNHVKEGAAQACISAGNTGALMAVSRYVLKTLPGIERPAIAFALPNPTGYTMMLDLGANVDCEPQHLLQFAEMGHALVAALEGKERPTIGLLNIGEEVIKGNETIKRAGELLRASTLNFRGNVEGNDIYKGTVDVIVCDGFVGNVALKTSEGLAQMLADIIKEEFSRSLLSKLMAILALPVLLRFKKRVDHRQYNGAALLGLRSLVIKSHGSADAYAFEWAIKRGYDAVKNGVLERLSRAMAENAAPLGESGRDANGAGQASPSAGQPAEPSAALSSKT.

The disordered stretch occupies residues 334–368 (AAPLGESGRDANGAGQASPSAGQPAEPSAALSSKT).

It belongs to the PlsX family. In terms of assembly, homodimer. Probably interacts with PlsY.

The protein localises to the cytoplasm. It catalyses the reaction a fatty acyl-[ACP] + phosphate = an acyl phosphate + holo-[ACP]. Its pathway is lipid metabolism; phospholipid metabolism. Catalyzes the reversible formation of acyl-phosphate (acyl-PO(4)) from acyl-[acyl-carrier-protein] (acyl-ACP). This enzyme utilizes acyl-ACP as fatty acyl donor, but not acyl-CoA. The protein is Phosphate acyltransferase of Burkholderia pseudomallei (strain 1106a).